We begin with the raw amino-acid sequence, 114 residues long: Histone H3-6 (114 aa).

The segment covering 1-17 (NTGGKAPRKHIAHKQAK) has biased composition (basic residues). The segment at 1–32 (NTGGKAPRKHIAHKQAKKSSAAAATGGVKKPH) is disordered. The segment covering 18-28 (KSSAAAATGGV) has biased composition (low complexity).

The protein belongs to the histone H3 family. The nucleosome is a histone octamer containing two molecules each of H2A, H2B, H3 and H4 assembled in one H3-H4 heterotetramer and two H2A-H2B heterodimers. The octamer wraps approximately 147 bp of DNA.

The protein resides in the nucleus. Its subcellular location is the chromosome. Functionally, core component of nucleosome. Nucleosomes wrap and compact DNA into chromatin, limiting DNA accessibility to the cellular machineries which require DNA as a template. Histones thereby play a central role in transcription regulation, DNA repair, DNA replication and chromosomal stability. DNA accessibility is regulated via a complex set of post-translational modifications of histones, also called histone code, and nucleosome remodeling. The polypeptide is Histone H3-6 (H3-6) (Stylonychia lemnae (Ciliate)).